We begin with the raw amino-acid sequence, 141 residues long: uncharacterized protein (141 aa).

2 helical membrane passes run 12–32 (GIAG…TLVT) and 35–55 (PGRV…SATW).

It localises to the cell membrane. This is an uncharacterized protein from Mycobacterium tuberculosis (strain CDC 1551 / Oshkosh).